The sequence spans 425 residues: MLDTKMLRANFQEIKAKLVHKGEDLTDFDKFEALDDRRRELIGKVEELKGKRNEVSQQVAVLKREKKDADHIIKEMREVGEEIKKLDEELRTVEAELDTILLSIPNIPHESVPVGETEDDNVEVRKWGEKPSFAYEPKPHWDIADELGILDFERAAKVTGSRFVFYKGLGARLERALYNFMLDLHVDEYNYTEVIPPYMVNRASMTGTGQLPKFEEDAFKIREEDYFLIPTAEVPITNMHRDEILSGDSLPINYAAFSACFRSEAGSAGRDTRGLIRQHQFNKVELVKFVKPEDSYEELEKLTNQAERVLQLLELPYRVMSMCTGDLGFTAAKKYDIEVWIPSQDTYREISSCSNFEAFQARRANIRFRREAKGKPEHVHTLNGSGLAVGRTVAAILENYQQEDGSVVIPKVLRPYMGNREVMKP.

L-serine is bound at residue 231–233 (TAE). 262 to 264 (RSE) serves as a coordination point for ATP. Residue glutamate 285 participates in L-serine binding. 349–352 (EISS) contributes to the ATP binding site. Serine 385 provides a ligand contact to L-serine.

The protein belongs to the class-II aminoacyl-tRNA synthetase family. Type-1 seryl-tRNA synthetase subfamily. Homodimer. The tRNA molecule binds across the dimer.

It is found in the cytoplasm. The enzyme catalyses tRNA(Ser) + L-serine + ATP = L-seryl-tRNA(Ser) + AMP + diphosphate + H(+). It carries out the reaction tRNA(Sec) + L-serine + ATP = L-seryl-tRNA(Sec) + AMP + diphosphate + H(+). The protein operates within aminoacyl-tRNA biosynthesis; selenocysteinyl-tRNA(Sec) biosynthesis; L-seryl-tRNA(Sec) from L-serine and tRNA(Sec): step 1/1. Catalyzes the attachment of serine to tRNA(Ser). Is also able to aminoacylate tRNA(Sec) with serine, to form the misacylated tRNA L-seryl-tRNA(Sec), which will be further converted into selenocysteinyl-tRNA(Sec). This chain is Serine--tRNA ligase, found in Bacillus subtilis (strain 168).